Reading from the N-terminus, the 220-residue chain is CRIB domain-containing protein RIC3 (220 aa).

The CRIB domain maps to 28–41 (IGFPTDVKHVAHIG). Positions 39–220 (HIGSDGPATN…CNDNNISDKE (182 aa)) are disordered. The span at 61 to 77 (NENGQVVSRADANNNQI) shows a compositional bias: polar residues. Residues 108-121 (NGSPPRRNSSASAS) are compositionally biased toward low complexity. Composition is skewed to basic residues over residues 127-136 (NTRRHHRSRH) and 172-184 (HSRK…RKPK). Residues 209–220 (DTCNDNNISDKE) are compositionally biased toward polar residues.

In terms of assembly, interacts with ARAC11/ROP1. As to expression, expressed in flowers and pollen.

It is found in the cytoplasm. Functionally, functions as a downstream effector of Rho-related GTP binding proteins of the 'Rho of Plants' (ROPs) family. Participates in the propagation of ROP GTPase signals in specific cellular responses. Functions as a downstream effector of ARAC11/ROP1 to activate calcium signaling that leads to F-actin disassembly associated with exocytosis in the tip of the growing pollen tube. Counteracts the ARAC11/ROP1-RIC4 pathway, which promotes apical F-actin assembly associated with vesicle accumulation, to control actin dynamics and pollen tube apical growth. This Arabidopsis thaliana (Mouse-ear cress) protein is CRIB domain-containing protein RIC3 (RIC3).